The following is a 179-amino-acid chain: Large ribosomal subunit protein uL5 (179 aa).

It belongs to the universal ribosomal protein uL5 family. As to quaternary structure, part of the 50S ribosomal subunit; part of the 5S rRNA/L5/L18/L25 subcomplex. Contacts the 5S rRNA and the P site tRNA. Forms a bridge to the 30S subunit in the 70S ribosome.

In terms of biological role, this is one of the proteins that bind and probably mediate the attachment of the 5S RNA into the large ribosomal subunit, where it forms part of the central protuberance. In the 70S ribosome it contacts protein S13 of the 30S subunit (bridge B1b), connecting the 2 subunits; this bridge is implicated in subunit movement. Contacts the P site tRNA; the 5S rRNA and some of its associated proteins might help stabilize positioning of ribosome-bound tRNAs. This chain is Large ribosomal subunit protein uL5, found in Nitrosomonas eutropha (strain DSM 101675 / C91 / Nm57).